A 446-amino-acid polypeptide reads, in one-letter code: Glutamine synthetase (446 aa).

Residues 18 to 103 enclose the GS beta-grasp domain; sequence ENVRYLRLQF…LICDVYKTDG (86 aa). A GS catalytic domain is found at 110–446; it reads PRANLKRVLK…WERDQYMKQY (337 aa). The Mg(2+) site is built by E134 and E136. Residue E186 participates in ATP binding. Residues E191 and E198 each coordinate Mg(2+). L-glutamate is bound by residues 242–243 and G243; that span reads NG. H247 is a Mg(2+) binding site. S251 provides a ligand contact to ATP. The L-glutamate site is built by R300, E306, and R318. ATP-binding residues include R318 and R323. E335 serves as a coordination point for Mg(2+). R337 contributes to the L-glutamate binding site.

The protein belongs to the glutamine synthetase family. As to quaternary structure, oligomer of 12 subunits arranged in the form of two hexagons. In its feedback-inhibited form, interacts with TnrA in order to block its DNA-binding activity. The cofactor is Mg(2+).

Its subcellular location is the cytoplasm. It catalyses the reaction L-glutamate + NH4(+) + ATP = L-glutamine + ADP + phosphate + H(+). With respect to regulation, inhibited by glutamine. Glutamine synthetase (GS) is an unusual multitasking protein that functions as an enzyme, a transcription coregulator, and a chaperone in ammonium assimilation and in the regulation of genes involved in nitrogen metabolism. It catalyzes the ATP-dependent biosynthesis of glutamine from glutamate and ammonia. Feedback-inhibited GlnA also interacts with and regulates the activity of the transcriptional regulator TnrA. During nitrogen limitation, TnrA is in its DNA-binding active state and turns on the transcription of genes required for nitrogen assimilation. Under conditions of nitrogen excess, feedback-inhibited GlnA forms a stable complex with TnrA, which inhibits its DNA-binding activity. In contrast, feedback-inhibited GlnA acts as a chaperone to stabilize the DNA-binding activity of GlnR, which represses the transcription of nitrogen assimilation genes. The sequence is that of Glutamine synthetase from Staphylococcus aureus (strain N315).